Reading from the N-terminus, the 137-residue chain is Ribosome-binding factor A (137 aa).

Belongs to the RbfA family. In terms of assembly, monomer. Binds 30S ribosomal subunits, but not 50S ribosomal subunits or 70S ribosomes.

It is found in the cytoplasm. In terms of biological role, one of several proteins that assist in the late maturation steps of the functional core of the 30S ribosomal subunit. Associates with free 30S ribosomal subunits (but not with 30S subunits that are part of 70S ribosomes or polysomes). Required for efficient processing of 16S rRNA. May interact with the 5'-terminal helix region of 16S rRNA. This chain is Ribosome-binding factor A, found in Allorhizobium ampelinum (strain ATCC BAA-846 / DSM 112012 / S4) (Agrobacterium vitis (strain S4)).